The chain runs to 188 residues: Probable chemoreceptor glutamine deamidase CheD (188 aa).

It belongs to the CheD family.

The catalysed reaction is L-glutaminyl-[protein] + H2O = L-glutamyl-[protein] + NH4(+). Its function is as follows. Probably deamidates glutamine residues to glutamate on methyl-accepting chemotaxis receptors (MCPs), playing an important role in chemotaxis. The polypeptide is Probable chemoreceptor glutamine deamidase CheD (Caulobacter sp. (strain K31)).